Consider the following 79-residue polypeptide: Cell division protein ZapB (79 aa).

Residues 3–79 are a coiled coil; that stretch reads LEVFEKLEAK…QALLGRMEEV (77 aa). Over residues 36–45 the composition is skewed to polar residues; sequence SLTQEVQSAQ. The disordered stretch occupies residues 36–63; sequence SLTQEVQSAQHQREELERENNSLKEQQS. Over residues 46–57 the composition is skewed to basic and acidic residues; the sequence is HQREELERENNS.

This sequence belongs to the ZapB family. As to quaternary structure, homodimer. The ends of the coiled-coil dimer bind to each other, forming polymers. Interacts with FtsZ.

Its subcellular location is the cytoplasm. In terms of biological role, non-essential, abundant cell division factor that is required for proper Z-ring formation. It is recruited early to the divisome by direct interaction with FtsZ, stimulating Z-ring assembly and thereby promoting cell division earlier in the cell cycle. Its recruitment to the Z-ring requires functional FtsA or ZipA. In Salmonella agona (strain SL483), this protein is Cell division protein ZapB.